Reading from the N-terminus, the 114-residue chain is MNIIDEINQEQMQSVLPAFGAGDTVAVHVKVKEGDRERVQIFEGICIARRNRGLHSAFTVRKISNGEGVERVFPSYSPLVTKVEVKRRGDVRRAKLYYLRDLSGKAARIKEKLG.

It belongs to the bacterial ribosomal protein bL19 family.

Functionally, this protein is located at the 30S-50S ribosomal subunit interface and may play a role in the structure and function of the aminoacyl-tRNA binding site. This is Large ribosomal subunit protein bL19 from Acidithiobacillus ferrooxidans (strain ATCC 23270 / DSM 14882 / CIP 104768 / NCIMB 8455) (Ferrobacillus ferrooxidans (strain ATCC 23270)).